The primary structure comprises 122 residues: Small ribosomal subunit protein uS13 (122 aa).

The disordered stretch occupies residues 95–122 (GLPVHGQRTHTNARTRKGPRKGAVGKKK).

It belongs to the universal ribosomal protein uS13 family. As to quaternary structure, part of the 30S ribosomal subunit. Forms a loose heterodimer with protein S19. Forms two bridges to the 50S subunit in the 70S ribosome.

Functionally, located at the top of the head of the 30S subunit, it contacts several helices of the 16S rRNA. In the 70S ribosome it contacts the 23S rRNA (bridge B1a) and protein L5 of the 50S subunit (bridge B1b), connecting the 2 subunits; these bridges are implicated in subunit movement. Contacts the tRNAs in the A and P-sites. The protein is Small ribosomal subunit protein uS13 of Lawsonia intracellularis (strain PHE/MN1-00).